The primary structure comprises 268 residues: Peptide transport system ATP-binding protein SapF (268 aa).

Positions Leu6 to Ile251 constitute an ABC transporter domain. Gly47–Ser54 contributes to the ATP binding site.

It belongs to the ABC transporter superfamily.

It localises to the cell inner membrane. In terms of biological role, involved in a peptide intake transport system that plays a role in the resistance to antimicrobial peptides. The protein is Peptide transport system ATP-binding protein SapF (sapF) of Escherichia coli O6:H1 (strain CFT073 / ATCC 700928 / UPEC).